The sequence spans 341 residues: GTPase Obg (341 aa).

Residues 1 to 159 form the Obg domain; it reads MKFVDEALIK…RNLRLELRVL (159 aa). The interval 128–150 is disordered; that stretch reads TRYKSSVNRSPRQTTPGSPGESR. Over residues 129 to 144 the composition is skewed to polar residues; it reads RYKSSVNRSPRQTTPG. The 175-residue stretch at 160–334 folds into the OBG-type G domain; sequence ADVGLLGLPN…LCYALMQLID (175 aa). GTP contacts are provided by residues 166–173, 191–195, 213–216, 283–286, and 315–317; these read GLPNAGKS, FTTLH, DIPG, NKID, and SAI. The Mg(2+) site is built by Ser-173 and Thr-193.

It belongs to the TRAFAC class OBG-HflX-like GTPase superfamily. OBG GTPase family. Monomer. It depends on Mg(2+) as a cofactor.

The protein resides in the cytoplasm. Its function is as follows. An essential GTPase which binds GTP, GDP and possibly (p)ppGpp with moderate affinity, with high nucleotide exchange rates and a fairly low GTP hydrolysis rate. Plays a role in control of the cell cycle, stress response, ribosome biogenesis and in those bacteria that undergo differentiation, in morphogenesis control. This Legionella pneumophila subsp. pneumophila (strain Philadelphia 1 / ATCC 33152 / DSM 7513) protein is GTPase Obg.